Here is a 515-residue protein sequence, read N- to C-terminus: Glucose-6-phosphate 1-dehydrogenase (515 aa).

Position 2 is an N-acetylalanine (alanine 2). Serine 8 bears the Phosphoserine mark. Position 10 is a phosphothreonine (threonine 10). NADP(+) is bound by residues 38–45 (GASGDLAK) and arginine 72. Position 89 is an N6-acetyllysine (lysine 89). NADP(+)-binding residues include tyrosine 147 and lysine 171. D-glucose 6-phosphate is bound by residues lysine 171, 201–205 (HYLGK), glutamate 239, and aspartate 258. Position 171 is an N6-(2-hydroxyisobutyryl)lysine; alternate (lysine 171). Lysine 171 is subject to N6-acetyllysine; alternate. The active-site Proton acceptor is histidine 263. Arginine 357 lines the NADP(+) pocket. D-glucose 6-phosphate is bound by residues lysine 360 and arginine 365. Lysine 366, arginine 370, and arginine 393 together coordinate NADP(+). Glutamine 395 contacts D-glucose 6-phosphate. NADP(+) is bound by residues 401–403 (YTK) and 421–423 (DLT). The residue at position 403 (lysine 403) is an N6-acetyllysine. The residue at position 432 (lysine 432) is an N6-acetyllysine. Arginine 487 contacts NADP(+). Lysine 497 is modified (N6-acetyllysine). NADP(+) is bound by residues tyrosine 503 and tryptophan 509. Phosphotyrosine is present on tyrosine 503.

The protein belongs to the glucose-6-phosphate dehydrogenase family. Homotetramer; dimer of dimers. Interacts with SIRT2; the interaction is enhanced by H(2)O(2) treatment. Forms a ternary complex with ALDOB and TP53; this interaction is direct. ALDOB stabilizes the complex inhibiting G6PD activity and keeping oxidative pentose phosphate metabolism in check. Acetylated by ELP3 at Lys-403; acetylation inhibits its homodimerization and enzyme activity. Deacetylated by SIRT2 at Lys-403; deacetylation stimulates its enzyme activity.

Its subcellular location is the cytoplasm. The protein localises to the cytosol. The protein resides in the membrane. The catalysed reaction is D-glucose 6-phosphate + NADP(+) = 6-phospho-D-glucono-1,5-lactone + NADPH + H(+). Its pathway is carbohydrate degradation; pentose phosphate pathway; D-ribulose 5-phosphate from D-glucose 6-phosphate (oxidative stage): step 1/3. Cytosolic glucose-6-phosphate dehydrogenase that catalyzes the first and rate-limiting step of the oxidative branch within the pentose phosphate pathway/shunt, an alternative route to glycolysis for the dissimilation of carbohydrates and a major source of reducing power and metabolic intermediates for fatty acid and nucleic acid biosynthetic processes. This chain is Glucose-6-phosphate 1-dehydrogenase (G6pdx), found in Rattus norvegicus (Rat).